The primary structure comprises 223 residues: uncharacterized protein (223 aa).

Residues 1–12 constitute a mitochondrion transit peptide; that stretch reads MFRSLVRKTTPL.

Its subcellular location is the mitochondrion. This is an uncharacterized protein from Candida albicans (strain WO-1) (Yeast).